Consider the following 519-residue polypeptide: MKPTAYFCMEFAIHQPLKTYAGGLGFLAGSHFRAAKRLNQPLVGVSILWSYGYYDQLRDREGKMKVEYIRKYYDFLEDIKLKVPVTINNNTVWVKAYKLEEDVFGTCPIYFLTTDIPENDDFSRTITHNLYDANNILHIAQQIVLGIGGYKVIKECENVKLFHMNEPHPLPLVFKLIEEYGLEYTREHTVFTTHTPLPEGNETQDINLLKSMGFFGNVDVKLAEKLGGNPFNYTVCALRVCKRANAVSKKHKEVCDRMWSWVKDRCEIVAITNAQDKYYWQDPVIREAAKKYDIDMLRERKMELKEILFEEVADQTGKIFKKDRLTVVWARRFTAYKRPHILLHDEMRLLELLKKKRIQVIWAGKPHPNDHNMIATFNWIVSKTRDMKGATILTGYELKLSKMLKQGSDIWLNTPKLNHEASGTSGMTASMNASIHMSTLDGWHVEWAKMYPDDSFTIGDGVRDDDAYVANCIYNLLEEVADMYDTERWWMKACNCVNHIVEYFDAERMAKEYAEKLYK.

It belongs to the glycogen phosphorylase family.

This is an uncharacterized protein from Methanocaldococcus jannaschii (strain ATCC 43067 / DSM 2661 / JAL-1 / JCM 10045 / NBRC 100440) (Methanococcus jannaschii).